We begin with the raw amino-acid sequence, 1023 residues long: Sodium/potassium-transporting ATPase subunit alpha-1 (1023 aa).

A propeptide spanning residues 1–5 (MGYGA) is cleaved from the precursor. Positions 1-11 (MGYGAGRDKYE) are enriched in basic and acidic residues. The disordered stretch occupies residues 1–34 (MGYGAGRDKYEPAATSEHGGKKGKGKGKDRDMEE). At 6–87 (GRDKYEPAAT…NALTPPPTTP (82 aa)) the chain is on the cytoplasmic side. A Phosphothreonine; by PKC modification is found at threonine 15. At serine 16 the chain carries Phosphoserine; by PKC. An interaction with phosphoinositide-3 kinase region spans residues 82-84 (PPP). Residues 88–108 (EWVKFCRQLFGGFSMLLWIGA) form a helical membrane-spanning segment. Residues 109–131 (ILCFLAYGIRKASDLEPDNDNLY) lie on the Extracellular side of the membrane. A helical transmembrane segment spans residues 132-152 (LGVVLSAVVIITGCFSYYQEA). The Cytoplasmic segment spans residues 153–288 (KSSRIMESFK…GGQTPIAVEI (136 aa)). The interval 215 to 235 (NSSLTGESEPQTRSPDFTNEN) is disordered. The helical transmembrane segment at 289–308 (GHFIHIITGVAVFLGVSFFI) threads the bilayer. Residues 309–320 (LSLILHYTWLEA) lie on the Extracellular side of the membrane. A helical transmembrane segment spans residues 321–338 (VIFLIGIIVANVPEGLLA). The Cytoplasmic segment spans residues 339–772 (TVTVCLTLTA…EEGRLIFDNL (434 aa)). Residue aspartate 376 is the 4-aspartylphosphate intermediate of the active site. An ATP-binding site is contributed by lysine 487. Positions 717 and 721 each coordinate Mg(2+). The chain crosses the membrane as a helical span at residues 773–792 (KKSIAYTLTSNIPEITPFLI). Residues 793-802 (FIIADIPLPL) are Extracellular-facing. The chain crosses the membrane as a helical span at residues 803–823 (GTVTILCIDLGTDMVPAISLA). The Cytoplasmic portion of the chain corresponds to 824 to 843 (YEQAESDIMKRQPRNPKKDK). A helical membrane pass occupies residues 844–866 (LVNERLISMAYGQIGMIQALGGF). Residues 867–918 (FAYFVILAENGFLPSTLLGIRVAWEDRYVNDVEDSYGQQWTYEQRKIVEFTC) are Extracellular-facing. Residues 919 to 938 (HTAFFVSIVVVQWADLIICK) form a helical membrane-spanning segment. Over 939–951 (TRRNSVFQQGMKN) the chain is Cytoplasmic. At serine 943 the chain carries Phosphoserine; by PKA. The chain crosses the membrane as a helical span at residues 952–970 (KILIFGLFEETALAAFLSY). Over 971–985 (CPGMDVALRMYPLKP) the chain is Extracellular. The helical transmembrane segment at 986–1006 (TWWFCAFPYSLLIFIYDEVRK) threads the bilayer. Residues 1007–1023 (LILRRSPGGWVEKETYY) lie on the Cytoplasmic side of the membrane.

It belongs to the cation transport ATPase (P-type) (TC 3.A.3) family. Type IIC subfamily. As to quaternary structure, the sodium/potassium-transporting ATPase is composed of a catalytic alpha subunit, an auxiliary non-catalytic beta subunit and an additional regulatory subunit. As to expression, mainly expressed in kidney. Found in bladder, colon, eye, and testis. Found in low levels in brain, heart, spleen and liver.

It localises to the cell membrane. It is found in the sarcolemma. It catalyses the reaction K(+)(out) + Na(+)(in) + ATP + H2O = K(+)(in) + Na(+)(out) + ADP + phosphate + H(+). With respect to regulation, this alpha subunit is resistant to ouabain. Functionally, this is the catalytic component of the active enzyme, which catalyzes the hydrolysis of ATP coupled with the exchange of sodium and potassium ions across the plasma membrane. This action creates the electrochemical gradient of sodium and potassium ions, providing the energy for active transport of various nutrients. The sequence is that of Sodium/potassium-transporting ATPase subunit alpha-1 (ATP1A1) from Rhinella marina (Cane toad).